A 402-amino-acid chain; its full sequence is uncharacterized protein (402 aa).

This is an uncharacterized protein from Saccharomyces cerevisiae (strain ATCC 204508 / S288c) (Baker's yeast).